Here is a 303-residue protein sequence, read N- to C-terminus: Coenzyme PQQ synthesis protein B (303 aa).

Belongs to the PqqB family.

It participates in cofactor biosynthesis; pyrroloquinoline quinone biosynthesis. Functionally, may be involved in the transport of PQQ or its precursor to the periplasm. The chain is Coenzyme PQQ synthesis protein B from Pseudomonas fluorescens (strain SBW25).